A 275-amino-acid chain; its full sequence is 2,3,4,5-tetrahydropyridine-2,6-dicarboxylate N-succinyltransferase (275 aa).

Positions 108 and 145 each coordinate substrate.

The protein belongs to the transferase hexapeptide repeat family. In terms of assembly, homotrimer.

It is found in the cytoplasm. The enzyme catalyses (S)-2,3,4,5-tetrahydrodipicolinate + succinyl-CoA + H2O = (S)-2-succinylamino-6-oxoheptanedioate + CoA. The protein operates within amino-acid biosynthesis; L-lysine biosynthesis via DAP pathway; LL-2,6-diaminopimelate from (S)-tetrahydrodipicolinate (succinylase route): step 1/3. The sequence is that of 2,3,4,5-tetrahydropyridine-2,6-dicarboxylate N-succinyltransferase from Maricaulis maris (strain MCS10) (Caulobacter maris).